Consider the following 928-residue polypeptide: Heme/hemopexin-binding protein (928 aa).

A signal peptide spans 1–21 (MYKLNVISLIILTTCSGAAYA). 10 repeat units span residues 101–106 (NGKVYL), 149–154 (KDRQVL), 155–160 (KEGLVL), 161–166 (KDGQVV), 167–172 (KEGQVI), 205–210 (NGKVYL), 279–284 (NGKVVL), 410–415 (NGKVNL), 635–640 (NGFVHL), and 674–679 (NGKVSM). The interval 101-679 (NGKVYLANPN…RLGMNGKVSM (579 aa)) is 6 X 6 AA approximate repeats. Residues 149 to 172 (KDRQVLKEGLVLKDGQVVKEGQVI) form a 4 X 6 AA approximate tandem repeats region.

It localises to the secreted. Binds heme/hemopexin complexes. The polypeptide is Heme/hemopexin-binding protein (hxuA) (Haemophilus influenzae).